Reading from the N-terminus, the 321-residue chain is Peroxidase 27 (321 aa).

The N-terminal stretch at 1-23 is a signal peptide; it reads MAASKRLVVSCLFLVLLFAQANS. Disulfide bonds link Cys35-Cys113, Cys68-Cys73, Cys119-Cys317, and Cys196-Cys228. The Proton acceptor role is filled by His66. Ca(2+) contacts are provided by Asp67, Val70, Gly72, Asp74, and Ser76. Pro159 is a substrate binding site. An N-linked (GlcNAc...) asparagine glycan is attached at Asn164. Residue His189 participates in heme b binding. Thr190 is a Ca(2+) binding site. N-linked (GlcNAc...) asparagine glycosylation occurs at Asn205. Ca(2+)-binding residues include Asp240, Ser243, and Asp248.

The protein belongs to the peroxidase family. Classical plant (class III) peroxidase subfamily. Heme b serves as cofactor. Requires Ca(2+) as cofactor. In terms of tissue distribution, expressed in the whole plant, but preferentially in roots and flowers.

Its subcellular location is the secreted. The enzyme catalyses 2 a phenolic donor + H2O2 = 2 a phenolic radical donor + 2 H2O. In terms of biological role, removal of H(2)O(2), oxidation of toxic reductants, biosynthesis and degradation of lignin, suberization, auxin catabolism, response to environmental stresses such as wounding, pathogen attack and oxidative stress. These functions might be dependent on each isozyme/isoform in each plant tissue. This Arabidopsis thaliana (Mouse-ear cress) protein is Peroxidase 27 (PER27).